Consider the following 471-residue polypeptide: 3-isopropylmalate dehydratase large subunit (471 aa).

3 residues coordinate [4Fe-4S] cluster: Cys347, Cys407, and Cys410. The interval 417–443 (TLQPGERSASTSNRNFEGRQGKGGRTH) is disordered.

The protein belongs to the aconitase/IPM isomerase family. LeuC type 1 subfamily. In terms of assembly, heterodimer of LeuC and LeuD. The cofactor is [4Fe-4S] cluster.

It carries out the reaction (2R,3S)-3-isopropylmalate = (2S)-2-isopropylmalate. Its pathway is amino-acid biosynthesis; L-leucine biosynthesis; L-leucine from 3-methyl-2-oxobutanoate: step 2/4. Catalyzes the isomerization between 2-isopropylmalate and 3-isopropylmalate, via the formation of 2-isopropylmaleate. The protein is 3-isopropylmalate dehydratase large subunit of Nocardioides sp. (strain ATCC BAA-499 / JS614).